The following is a 382-amino-acid chain: Homeobox protein SHOOT MERISTEMLESS (382 aa).

The disordered stretch occupies residues M26–H59. Over residues H44 to G53 the composition is skewed to basic and acidic residues. Positions E262 to F282 constitute an ELK domain. Residues M283–S346 constitute a DNA-binding region (homeobox; TALE-type).

It belongs to the TALE/KNOX homeobox family. In terms of assembly, forms homodimers. May form heterodimeric complexes with TALE/BELL proteins BEL1, BLH2, BLH3, BLH8/PNF, BLH9/PNY and ATH1. Interacts with CCT8. Binds to MBP2C; this interaction reduces RNA binding capacity. Interacts with FTIP3 and FTIP4. As to expression, expressed in all four types of shoot apical meristems (SAM) i.e. in vegetative, axillary, inflorescence and floral.

The protein localises to the nucleus. The protein resides in the cell junction. Its subcellular location is the plasmodesma. It localises to the cytoplasm. It is found in the endosome. The protein localises to the cell membrane. Required for shoot apical meristem (SAM) formation during embryogenesis. Negatively regulates ASYMMETRIC LEAVES1 (AS1) and ASYMMETRIC LEAVES2 (AS2 or LBD6). Probably binds to the DNA sequence 5'-TGAC-3'. Binds to RNA. This Arabidopsis thaliana (Mouse-ear cress) protein is Homeobox protein SHOOT MERISTEMLESS.